Consider the following 430-residue polypeptide: Putative glycylpeptide N-tetradecanoyltransferase 2 (430 aa).

Tetradecanoyl-CoA is bound by residues 47 to 50, 181 to 183, and 189 to 193; these read HKFW, LCV, and SKGLA. Leucine 430 (proton acceptor; via carboxylate) is an active-site residue.

Belongs to the NMT family.

It carries out the reaction N-terminal glycyl-[protein] + tetradecanoyl-CoA = N-tetradecanoylglycyl-[protein] + CoA + H(+). In terms of biological role, may add a myristoyl group to the N-terminal glycine residue of certain cellular proteins. This chain is Putative glycylpeptide N-tetradecanoyltransferase 2 (NMT2), found in Arabidopsis thaliana (Mouse-ear cress).